Consider the following 245-residue polypeptide: Cysteine-rich secretory protein 3 (245 aa).

The signal sequence occupies residues 1–22; that stretch reads MALLPVLLFLAAVLLPFFPASG. Residues 42–171 form the SCP domain; that stretch reads VNKHNDLRRT…TLKYYYVCQY (130 aa). Cystine bridges form between cysteine 191/cysteine 198, cysteine 194/cysteine 203, cysteine 207/cysteine 240, cysteine 216/cysteine 234, and cysteine 225/cysteine 238. In terms of domain architecture, ShKT spans 207–240; the sequence is CEYEDLVSNCDSLKKIAGCEHELLKENCKTTCQC.

Belongs to the CRISP family. Interacts with A1BG. In terms of tissue distribution, expressed in the salivary gland, in the ampulla and the seminal vesicle.

The protein resides in the secreted. This Equus caballus (Horse) protein is Cysteine-rich secretory protein 3 (CRISP3).